Consider the following 119-residue polypeptide: Ribonuclease P protein component (119 aa).

The protein belongs to the RnpA family. As to quaternary structure, consists of a catalytic RNA component (M1 or rnpB) and a protein subunit.

It carries out the reaction Endonucleolytic cleavage of RNA, removing 5'-extranucleotides from tRNA precursor.. Its function is as follows. RNaseP catalyzes the removal of the 5'-leader sequence from pre-tRNA to produce the mature 5'-terminus. It can also cleave other RNA substrates such as 4.5S RNA. The protein component plays an auxiliary but essential role in vivo by binding to the 5'-leader sequence and broadening the substrate specificity of the ribozyme. This chain is Ribonuclease P protein component, found in Syntrophus aciditrophicus (strain SB).